The sequence spans 315 residues: NADH-ubiquinone oxidoreductase chain 1 (315 aa).

8 helical membrane passes run Phe6–Phe26, Ile80–Val100, Leu107–Gly127, Leu153–Phe173, Ile177–Leu197, Leu229–Phe249, Asp253–Ala273, and Cys292–Phe312.

The protein belongs to the complex I subunit 1 family.

The protein localises to the mitochondrion inner membrane. It catalyses the reaction a ubiquinone + NADH + 5 H(+)(in) = a ubiquinol + NAD(+) + 4 H(+)(out). Its function is as follows. Core subunit of the mitochondrial membrane respiratory chain NADH dehydrogenase (Complex I) that is believed to belong to the minimal assembly required for catalysis. Complex I functions in the transfer of electrons from NADH to the respiratory chain. The immediate electron acceptor for the enzyme is believed to be ubiquinone. This chain is NADH-ubiquinone oxidoreductase chain 1 (mt:ND1), found in Drosophila persimilis (Fruit fly).